The primary structure comprises 887 residues: Endoglucanase 1 (887 aa).

The N-terminal stretch at 1–55 is a signal peptide; sequence MRLVNSLGRRKILLILAVIVAFSTVLLFAKLWGRKTSSTLDEVGSKTHGDLTAEN. The tract at residues 40-66 is disordered; it reads LDEVGSKTHGDLTAENKNGGYLPEEEI. Positions 43-53 are enriched in basic and acidic residues; sequence VGSKTHGDLTA. Positions 56-518 are catalytic; that stretch reads KNGGYLPEEE…AKMYKLYGGS (463 aa). Aspartate 131 (nucleophile) is an active-site residue. The tract at residues 441–460 is disordered; sequence ENPPKRPHHRTAHGSWADSQ. Residues histidine 448, aspartate 486, and glutamate 495 contribute to the active site. Residues 529–684 enclose the CBM3 1 domain; it reads VPEDEIFVEA…GVLVFGREPG (156 aa). Positions 684 to 730 are disordered; it reads GSASKSTSKDNGLSKATPTVKTESQPTAKHTQNPASDFKTPANQNSV. Positions 686-729 are enriched in polar residues; the sequence is ASKSTSKDNGLSKATPTVKTESQPTAKHTQNPASDFKTPANQNS. A CBM3 2 domain is found at 736-887; it reads IKGEVVLQYA…SNKLVYGKEP (152 aa).

The protein belongs to the glycosyl hydrolase 9 (cellulase E) family.

The enzyme catalyses Endohydrolysis of (1-&gt;4)-beta-D-glucosidic linkages in cellulose, lichenin and cereal beta-D-glucans.. It functions in the pathway glycan metabolism; cellulose degradation. Its function is as follows. This enzyme catalyzes the endohydrolysis of 1,4-beta-glucosidic linkages in cellulose, lichenin and cereal beta-D-glucans. Principally active against barley beta-glucan. The polypeptide is Endoglucanase 1 (celI) (Acetivibrio thermocellus (strain ATCC 27405 / DSM 1237 / JCM 9322 / NBRC 103400 / NCIMB 10682 / NRRL B-4536 / VPI 7372) (Clostridium thermocellum)).